Reading from the N-terminus, the 623-residue chain is DEAD-box ATP-dependent RNA helicase 52C (623 aa).

Residues 1 to 120 (MATPSRTSWA…DGDAAAGAGD (120 aa)) are disordered. Low complexity predominate over residues 10–29 (ADVADADPAPAPAPAANGPA). Over residues 54 to 69 (APPPSSSSSSAPPPRA) the composition is skewed to pro residues. Low complexity predominate over residues 70–83 (APGLLAPRPAAAGM). Gly residues predominate over residues 84–97 (GRMGGGGGGGGFGG). The Q motif signature appears at 155–183 (GTFAEIDLGQALNDNIRRCKYVRPTPVQR). A Helicase ATP-binding domain is found at 186–372 (IPISLAGRDL…SDFLENYIFL (187 aa)). 199 to 206 (AQTGSGKT) provides a ligand contact to ATP. Positions 316-319 (DEAD) match the DEAD box motif. The Helicase C-terminal domain maps to 399–550 (HLMDLLHAQR…EVPAWLSRYA (152 aa)). Residues 553-595 (PSYGGGGGRNRRSGGGSRFGGRDFRRDSSSGRGGGDYYGGGSS) are disordered. Gly residues predominate over residues 555 to 571 (YGGGGGRNRRSGGGSRF). Positions 572–581 (GGRDFRRDSS) are enriched in basic and acidic residues. The segment covering 583–595 (GRGGGDYYGGGSS) has biased composition (gly residues).

The protein belongs to the DEAD box helicase family. DDX3/DED1 subfamily.

It catalyses the reaction ATP + H2O = ADP + phosphate + H(+). The sequence is that of DEAD-box ATP-dependent RNA helicase 52C from Oryza sativa subsp. japonica (Rice).